Reading from the N-terminus, the 308-residue chain is Isoaspartyl peptidase/L-asparaginase (308 aa).

Met-1 carries the post-translational modification N-acetylmethionine. Thr-168 (nucleophile) is an active-site residue. Residues 196-199 and 219-222 each bind substrate; these read RVGD and TGHG.

It belongs to the Ntn-hydrolase family. As to quaternary structure, heterodimer of an alpha and beta chain produced by autocleavage. This heterodimer may then dimerize in turn, giving rise to a heterotetramer. In terms of processing, cleaved into an alpha and beta chain by autocatalysis; this activates the enzyme. The N-terminal residue of the beta subunit is responsible for the nucleophile hydrolase activity.

The protein localises to the cytoplasm. It catalyses the reaction L-asparagine + H2O = L-aspartate + NH4(+). The enzyme catalyses Cleavage of a beta-linked Asp residue from the N-terminus of a polypeptide.. In terms of biological role, has both L-asparaginase and beta-aspartyl peptidase activity. May be involved in the production of L-aspartate, which can act as an excitatory neurotransmitter in some brain regions. Is highly active with L-Asp beta-methyl ester. Besides, has catalytic activity toward beta-aspartyl dipeptides and their methyl esters, including beta-L-Asp-L-Phe, beta-L-Asp-L-Phe methyl ester (aspartame), beta-L-Asp-L-Ala, beta-L-Asp-L-Leu and beta-L-Asp-L-Lys. Does not have aspartylglucosaminidase activity and is inactive toward GlcNAc-L-Asn. Likewise, has no activity toward glutamine. The chain is Isoaspartyl peptidase/L-asparaginase (ASRGL1) from Macaca fascicularis (Crab-eating macaque).